The following is a 303-amino-acid chain: MALSLLLAVVCAKPLVSRAELRRIQALNPPWKAGMPKRFENVTEDEFRSMLIRPDRLRARSGSLPPISITEVQELVDPIPPQFDFRDEYPQCVKPALDQGSCGSCWAFSAIGVFGDRRCAMGIDKEAVSYSQQHLISCSLENFGCDGGDFQPTWSFLTFTGATTAECVKYVDYGHTVASPCPAVCDDGSPIQLYKAHGYGQVSKSVPAIMGMLVAGGPLQTMIVVYADLSYYESGVYKHTYGTINLGFHALEIVGYGTTDDGTDYWIIKNSWGPDWGENGYFRIVRGVNECRIEDEIYAVYLD.

Positions 1–19 are cleaved as a signal peptide; it reads MALSLLLAVVCAKPLVSRA. A glycan (N-linked (GlcNAc...) asparagine) is linked at Asn-41. 3 disulfides stabilise this stretch: Cys-92–Cys-119, Cys-102–Cys-145, and Cys-138–Cys-181. Cys-105 is a catalytic residue. Residues His-249 and Asn-270 contribute to the active site.

Belongs to the peptidase C1 family.

It is found in the vacuole. Thiol protease which is required for parasite excystation and invasion of the proximal small intestine of the human host. The sequence is that of Cathepsin B-like CP1 (CP1) from Giardia intestinalis (Giardia lamblia).